The chain runs to 99 residues: Biogenesis of lysosome-related organelles complex 1 subunit SNN1 (99 aa).

The stretch at 34 to 94 forms a coiled coil; that stretch reads SINELRESQA…VVLKRYEKMV (61 aa).

It belongs to the SNAPIN family. As to quaternary structure, component of the biogenesis of lysosome-related organelles complex-1 (BLOC-1).

The protein localises to the endosome. Component of the biogenesis of lysosome-related organelles complex-1 (BLOC-1), a complex involved in endosomal cargo sorting. This is Biogenesis of lysosome-related organelles complex 1 subunit SNN1 (SNN1) from Kluyveromyces lactis (strain ATCC 8585 / CBS 2359 / DSM 70799 / NBRC 1267 / NRRL Y-1140 / WM37) (Yeast).